A 616-amino-acid polypeptide reads, in one-letter code: ATP-dependent zinc metalloprotease FtsH 3 (616 aa).

Residues methionine 1–arginine 9 lie on the Cytoplasmic side of the membrane. The helical transmembrane segment at asparagine 10–aspartate 30 threads the bilayer. Residues arginine 31–tryptophan 108 are Lumenal-facing. Residues phenylalanine 109 to phenylalanine 129 form a helical membrane-spanning segment. The Cytoplasmic portion of the chain corresponds to arginine 130 to valine 616. ATP is bound at residue glycine 201–threonine 208. Histidine 423 provides a ligand contact to Zn(2+). Glutamate 424 is an active-site residue. Positions 427 and 504 each coordinate Zn(2+).

It in the central section; belongs to the AAA ATPase family. In the C-terminal section; belongs to the peptidase M41 family. In terms of assembly, homohexamer (Potential). Part of a large complex that includes FtsH2 and PSII. Coimmunoprecipitates with YidC. Zn(2+) is required as a cofactor.

Its subcellular location is the cellular thylakoid membrane. In terms of biological role, acts as a processive, ATP-dependent zinc metallopeptidase for both cytoplasmic and membrane proteins. Plays a role in the quality control of integral membrane proteins. This Synechocystis sp. (strain ATCC 27184 / PCC 6803 / Kazusa) protein is ATP-dependent zinc metalloprotease FtsH 3.